Consider the following 202-residue polypeptide: Securin (202 aa).

Ala2 carries the post-translational modification N-acetylalanine. The interval 35–90 (LDGRSQVSTPRFGKTFDAPPALPKATRKALGTVNRATEKSVKTKGPLKQKQPSFSA) is disordered. Positions 61–64 (RKAL) match the D-box motif. Short sequence motifs (TEK-box) lie at residues 71-73 (TEK) and 94-96 (TEK). The short motif at 163 to 173 (PPSPVKMPSPP) is the SH3-binding element. Ser165 carries the phosphoserine; by CDK1 modification.

It belongs to the securin family. In terms of assembly, interacts with RPS10 and DNAJA1. Interacts with the caspase-like ESPL1, and prevents its protease activity probably by covering its active site. Interacts with TP53 and blocks its activity probably by blocking its binding to DNA. Interacts with the Ku 70 kDa subunit of ds-DNA kinase. Interacts with PTTG1IP. In terms of processing, phosphorylated at Ser-165 by CDK1 during mitosis. Phosphorylated in vitro by ds-DNA kinase. Post-translationally, ubiquitinated through 'Lys-11' linkage of ubiquitin moieties by the anaphase promoting complex (APC) at the onset of anaphase, conducting to its degradation. 'Lys-11'-linked ubiquitination is mediated by the E2 ligase UBE2C/UBCH10. As to expression, expressed at low level in most tissues, except in adult testis, where it is highly expressed. Overexpressed in many patients suffering from pituitary adenomas, primary epithelial neoplasias, and esophageal cancer.

The protein resides in the cytoplasm. The protein localises to the nucleus. Functionally, regulatory protein, which plays a central role in chromosome stability, in the p53/TP53 pathway, and DNA repair. Probably acts by blocking the action of key proteins. During the mitosis, it blocks Separase/ESPL1 function, preventing the proteolysis of the cohesin complex and the subsequent segregation of the chromosomes. At the onset of anaphase, it is ubiquitinated, conducting to its destruction and to the liberation of ESPL1. Its function is however not limited to a blocking activity, since it is required to activate ESPL1. Negatively regulates the transcriptional activity and related apoptosis activity of TP53. The negative regulation of TP53 may explain the strong transforming capability of the protein when it is overexpressed. May also play a role in DNA repair via its interaction with Ku, possibly by connecting DNA damage-response pathways with sister chromatid separation. The protein is Securin (PTTG1) of Homo sapiens (Human).